The sequence spans 340 residues: GTPase Obg (340 aa).

The 159-residue stretch at 1 to 159 folds into the Obg domain; that stretch reads MGFIDEVKLC…KHVLLKLKVL (159 aa). The 170-residue stretch at 160–329 folds into the OBG-type G domain; it reads SDVGIIGMPN…LSEKLKKSNS (170 aa). GTP contacts are provided by residues 166 to 173, 191 to 195, 212 to 215, 279 to 282, and 310 to 312; these read GMPNAGKS, FTTVR, DIPG, NKCD, and NGD. The Mg(2+) site is built by Ser173 and Thr193.

This sequence belongs to the TRAFAC class OBG-HflX-like GTPase superfamily. OBG GTPase family. In terms of assembly, monomer. Mg(2+) serves as cofactor.

The protein resides in the cytoplasm. Its function is as follows. An essential GTPase which binds GTP, GDP and possibly (p)ppGpp with moderate affinity, with high nucleotide exchange rates and a fairly low GTP hydrolysis rate. Plays a role in control of the cell cycle, stress response, ribosome biogenesis and in those bacteria that undergo differentiation, in morphogenesis control. The chain is GTPase Obg from Wolbachia sp. subsp. Drosophila simulans (strain wRi).